We begin with the raw amino-acid sequence, 236 residues long: MTHLAVNVDHIATLRQARGVDYPDPVAGAVLAQLAGAHGIVAHLREDRRHIQDTDVVRLRAAARRFILEMAVTPEMEKIALSVKPDLVTLVPEKRKELTTEGGLNLARHGGPVAKTIETLHRNEIPVSLFIDPDPGQVRRSHDAGAMAVEIHTGAFCEAATEKIRQKEFDRIRKAVEVARNLGLIVNAGHGLCYTTIEWMVTLKEIDEFSIGHSIVSRAALVGMDRAVRDMLALIS.

Asn-7 lines the 3-amino-2-oxopropyl phosphate pocket. Residue 9–10 (DH) coordinates 1-deoxy-D-xylulose 5-phosphate. 3-amino-2-oxopropyl phosphate is bound at residue Arg-18. Catalysis depends on His-43, which acts as the Proton acceptor. Residues Arg-45 and His-50 each contribute to the 1-deoxy-D-xylulose 5-phosphate site. Glu-69 serves as the catalytic Proton acceptor. A 1-deoxy-D-xylulose 5-phosphate-binding site is contributed by Thr-99. His-190 (proton donor) is an active-site residue. 3-amino-2-oxopropyl phosphate is bound by residues Gly-191 and 212-213 (GH).

It belongs to the PNP synthase family. As to quaternary structure, homooctamer; tetramer of dimers.

It is found in the cytoplasm. The catalysed reaction is 3-amino-2-oxopropyl phosphate + 1-deoxy-D-xylulose 5-phosphate = pyridoxine 5'-phosphate + phosphate + 2 H2O + H(+). It participates in cofactor biosynthesis; pyridoxine 5'-phosphate biosynthesis; pyridoxine 5'-phosphate from D-erythrose 4-phosphate: step 5/5. Catalyzes the complicated ring closure reaction between the two acyclic compounds 1-deoxy-D-xylulose-5-phosphate (DXP) and 3-amino-2-oxopropyl phosphate (1-amino-acetone-3-phosphate or AAP) to form pyridoxine 5'-phosphate (PNP) and inorganic phosphate. The protein is Pyridoxine 5'-phosphate synthase of Desulfosudis oleivorans (strain DSM 6200 / JCM 39069 / Hxd3) (Desulfococcus oleovorans).